We begin with the raw amino-acid sequence, 115 residues long: MTTSTAAAAKSAYRQLLRSTRVVFHNDLPVLIAARQEARQNFEKNRRPAVDTGMQINHAIEVANILRHNIVQGSREQGDETAKWELNIHDQIERGDNDSIKVGNQDVKIHKACSS.

The N-terminal 23 residues, 1–23 (MTTSTAAAAKSAYRQLLRSTRVV), are a transit peptide targeting the mitochondrion.

This sequence belongs to the complex I LYR family. MZM1 subfamily. Interacts with RIP1.

It is found in the mitochondrion matrix. Its function is as follows. Assembly factor required for Rieske Fe-S protein RIP1 incorporation into the cytochrome b-c1 (CIII) complex. Functions as a chaperone, binding to this subunit within the mitochondrial matrix and stabilizing it prior to its translocation and insertion into the late CIII dimeric intermediate within the mitochondrial inner membrane. Modulates the mitochondrial matrix zinc pool. The polypeptide is Mitochondrial zinc maintenance protein 1, mitochondrial (MZM1) (Penicillium rubens (strain ATCC 28089 / DSM 1075 / NRRL 1951 / Wisconsin 54-1255) (Penicillium chrysogenum)).